A 177-amino-acid polypeptide reads, in one-letter code: Glutamyl-tRNA(Gln) amidotransferase subunit F, mitochondrial (177 aa).

A mitochondrion-targeting transit peptide spans 1–16; the sequence is MIRINSRGLTVSTRRF. The disordered stretch occupies residues 148–177; it reads PAKGETQGSFNVANMNPRNRPFATIRSKQG. The span at 153 to 164 shows a compositional bias: polar residues; it reads TQGSFNVANMNP.

Belongs to the GatF family. Subunit of the heterotrimeric GatFAB amidotransferase (AdT) complex, composed of A, B and F subunits.

The protein localises to the mitochondrion inner membrane. The enzyme catalyses L-glutamyl-tRNA(Gln) + L-glutamine + ATP + H2O = L-glutaminyl-tRNA(Gln) + L-glutamate + ADP + phosphate + H(+). Functionally, allows the formation of correctly charged Gln-tRNA(Gln) through the transamidation of misacylated Glu-tRNA(Gln) in the mitochondria. The reaction takes place in the presence of glutamine and ATP through an activated gamma-phospho-Glu-tRNA(Gln). Required for proper protein synthesis within the mitochondrion. This chain is Glutamyl-tRNA(Gln) amidotransferase subunit F, mitochondrial, found in Scheffersomyces stipitis (strain ATCC 58785 / CBS 6054 / NBRC 10063 / NRRL Y-11545) (Yeast).